Reading from the N-terminus, the 616-residue chain is Chaperone protein HscA (616 aa).

The protein belongs to the heat shock protein 70 family.

Functionally, chaperone involved in the maturation of iron-sulfur cluster-containing proteins. Has a low intrinsic ATPase activity which is markedly stimulated by HscB. Involved in the maturation of IscU. The sequence is that of Chaperone protein HscA from Salmonella paratyphi A (strain ATCC 9150 / SARB42).